The primary structure comprises 78 residues: Large ribosomal subunit protein bL28 (78 aa).

The segment at 1–23 is disordered; that stretch reads MSRVCQVTGKKPMVGNNRSHAKN.

This sequence belongs to the bacterial ribosomal protein bL28 family.

This Shewanella frigidimarina (strain NCIMB 400) protein is Large ribosomal subunit protein bL28.